Consider the following 137-residue polypeptide: Regulator of cell cycle RGCC (137 aa).

Disordered stretches follow at residues 1–20 and 57–80; these read MKPP…APAL and LERM…SESA. Low complexity predominate over residues 65–80; it reads SASVSDSSGFSDSESA. Ser67, Ser69, Ser71, Ser75, Ser91, and Ser97 each carry phosphoserine. Thr111 carries the phosphothreonine; by CDK1 modification.

In terms of assembly, interacts with SMAD3. Interacts with CDK1 and PLK1. As to expression, detected in brain, heart and liver (at protein level). Highly expressed in liver, skeletal muscle, kidney and pancreas. Detected at lower levels in heart, brain and placenta. Detected in aorta endothelial cells. Overexpressed in colon, breast, prostate, bladder, lung, and ovarian cancer tissues.

It localises to the cytoplasm. The protein localises to the nucleus. The protein resides in the cytoskeleton. It is found in the microtubule organizing center. Its subcellular location is the centrosome. Functionally, modulates the activity of cell cycle-specific kinases. Enhances CDK1 activity. May contribute to the regulation of the cell cycle. May inhibit growth of glioma cells by promoting arrest of mitotic progression at the G2/M transition. Fibrogenic factor contributing to the pathogenesis of renal fibrosis through fibroblast activation. The protein is Regulator of cell cycle RGCC (RGCC) of Homo sapiens (Human).